The chain runs to 735 residues: Ribosomal protein S6 kinase alpha-1 (735 aa).

The residue at position 54 (Ser-54) is a Phosphoserine. The 260-residue stretch at 62 to 321 (FELLKVLGQG…AEEIKRHIFY (260 aa)) folds into the Protein kinase 1 domain. ATP is bound by residues 68-76 (LGQGSFGKV) and Lys-94. Asp-187 functions as the Proton acceptor in the catalytic mechanism. The residue at position 221 (Ser-221) is a Phosphoserine; by PDPK1. Ser-307 carries the post-translational modification Phosphoserine. An AGC-kinase C-terminal domain is found at 322–391 (STIDWNKLYR…VATGLMEDDS (70 aa)). Residue Thr-359 is modified to Phosphothreonine. Ser-363 is subject to Phosphoserine. 2 positions are modified to phosphoserine; by autocatalysis: Ser-369 and Ser-380. Residues 418-675 (YIVKETIGVG…AKQVLQHPWI (258 aa)) enclose the Protein kinase 2 domain. Residues 424 to 432 (IGVGSYSVC) and Lys-447 contribute to the ATP site. Asp-535 (proton acceptor) is an active-site residue. Thr-573 is modified (phosphothreonine). At Ser-732 the chain carries Phosphoserine.

Belongs to the protein kinase superfamily. AGC Ser/Thr protein kinase family. S6 kinase subfamily. Forms a complex with either MAPK1/ERK2 or MAPK3/ERK1 in quiescent cells. Transiently dissociates following mitogenic stimulation. Interacts with ETV1/ER81 and FGFR1. Mg(2+) is required as a cofactor. Activated by phosphorylation at Ser-221 by PDPK1. Autophosphorylated on Ser-380, as part of the activation process. May be phosphorylated at Thr-359 and Ser-363 by MAPK1/ERK2 and MAPK3/ERK1. Post-translationally, N-terminal myristoylation results in an activated kinase in the absence of added growth factors.

It localises to the nucleus. The protein resides in the cytoplasm. The catalysed reaction is L-seryl-[protein] + ATP = O-phospho-L-seryl-[protein] + ADP + H(+). It carries out the reaction L-threonyl-[protein] + ATP = O-phospho-L-threonyl-[protein] + ADP + H(+). Its activity is regulated as follows. Upon extracellular signal or mitogen stimulation, phosphorylated at Thr-573 in the C-terminal kinase domain (CTKD) by MAPK1/ERK2 and MAPK3/ERK1. The activated CTKD then autophosphorylates Ser-380, allowing binding of PDPK1, which in turn phosphorylates Ser-221 in the N-terminal kinase domain (NTDK) leading to the full activation of the protein and subsequent phosphorylation of the substrates by the NTKD. Functionally, serine/threonine-protein kinase that acts downstream of ERK (MAPK1/ERK2 and MAPK3/ERK1) signaling and mediates mitogenic and stress-induced activation of the transcription factors CREB1, ETV1/ER81 and NR4A1/NUR77, regulates translation through RPS6 and EIF4B phosphorylation, and mediates cellular proliferation, survival, and differentiation by modulating mTOR signaling and repressing pro-apoptotic function of BAD and DAPK1. In fibroblast, is required for EGF-stimulated phosphorylation of CREB1, which results in the subsequent transcriptional activation of several immediate-early genes. In response to mitogenic stimulation (EGF and PMA), phosphorylates and activates NR4A1/NUR77 and ETV1/ER81 transcription factors and the cofactor CREBBP. Upon insulin-derived signal, acts indirectly on the transcription regulation of several genes by phosphorylating GSK3B at 'Ser-9' and inhibiting its activity. Phosphorylates RPS6 in response to serum or EGF via an mTOR-independent mechanism and promotes translation initiation by facilitating assembly of the pre-initiation complex. In response to insulin, phosphorylates EIF4B, enhancing EIF4B affinity for the EIF3 complex and stimulating cap-dependent translation. Is involved in the mTOR nutrient-sensing pathway by directly phosphorylating TSC2 at 'Ser-1798', which potently inhibits TSC2 ability to suppress mTOR signaling, and mediates phosphorylation of RPTOR, which regulates mTORC1 activity and may promote rapamycin-sensitive signaling independently of the PI3K/AKT pathway. Also involved in feedback regulation of mTORC1 and mTORC2 by phosphorylating DEPTOR. Mediates cell survival by phosphorylating the pro-apoptotic proteins BAD and DAPK1 and suppressing their pro-apoptotic function. Promotes the survival of hepatic stellate cells by phosphorylating CEBPB in response to the hepatotoxin carbon tetrachloride (CCl4). Mediates induction of hepatocyte prolifration by TGFA through phosphorylation of CEBPB. Is involved in cell cycle regulation by phosphorylating the CDK inhibitor CDKN1B, which promotes CDKN1B association with 14-3-3 proteins and prevents its translocation to the nucleus and inhibition of G1 progression. Phosphorylates EPHA2 at 'Ser-897', the RPS6KA-EPHA2 signaling pathway controls cell migration. In response to mTORC1 activation, phosphorylates EIF4B at 'Ser-406' and 'Ser-422' which stimulates bicarbonate cotransporter SLC4A7 mRNA translation, increasing SLC4A7 protein abundance and function. The polypeptide is Ribosomal protein S6 kinase alpha-1 (Rps6ka1) (Rattus norvegicus (Rat)).